Here is a 100-residue protein sequence, read N- to C-terminus: uncharacterized protein (100 aa).

The span at 65–91 (DDRERHLSATGERRREQGFGTSRRKDP) shows a compositional bias: basic and acidic residues. Positions 65 to 100 (DDRERHLSATGERRREQGFGTSRRKDPSLYNWSDVK) are disordered.

Belongs to the chlamydial CPn_0121/CT_031/TC_0300 family.

This is an uncharacterized protein from Chlamydia trachomatis serovar D (strain ATCC VR-885 / DSM 19411 / UW-3/Cx).